The chain runs to 699 residues: MTAIRGGSRRAPGLALALLGGVLLGACHGDENAQVNALPGFVSGSVRKTAYDGASDDLLTAGLGKTGLGSDTRPGFANPAQPSAAELRRLAIYSNYRALVDITPNGGYGRFWGPNVDLAGNDTLGEGKIAGTEYLAYSDDGSGRKNVTLLVQVPASFDPANPCIVTATASGSRGVYGAIAAAGEWGLKRGCAVAYNDKGGGNGAHEIGTGVVTLIDGTLATASSAGSSSLFTASESSSTLAAFNSAFPNRYAYKHAHSQQNPEQDWGRVTLQAVEFAYWALNEQFGPVVDGTRHGIRYRPGDITTIAASVSNGGGSALAAAEQDTRGWITAVVVGEPQINVRMTPGVTVEQGGAPVPSFGRPLADYATLANLLQPCAAAAVAATGAPYLSALPMGVTQSIRTQRCATLAAAGLVSGADTASQASDALAQLHAAGYLADSDLLQAPMWDSQAMPAIAVTYANAYTRSRVTDNLCNFSFATTNPVTGAVAAPAVSPMTNLFGAGNGVPPTNGINLVFNGASGGVDHRLATPDASFAGAFCLRQLWTANQLGIGTNVDAVRVAANLQHKPAIIVHGRSDALVPVNHASRAYVAQNSATEGRASQLSFYEVTNGQHFDAFLSVPGFDTRFVPVHYYDEQALNLMWNHLKSGAPLPPSQVIRTVPRGGVPGAAPALSTANLPPIVQSPGANAIAVNAGVIDVPL.

An N-terminal signal peptide occupies residues 1–33; sequence MTAIRGGSRRAPGLALALLGGVLLGACHGDENA. Catalysis depends on serine 311, which acts as the Charge relay system.

This sequence belongs to the D-(-)-3-hydroxybutyrate oligomer hydrolase family.

Its subcellular location is the secreted. The enzyme catalyses (3R)-hydroxybutanoate dimer + H2O = 2 (R)-3-hydroxybutanoate + H(+). It functions in the pathway lipid metabolism; butanoate metabolism. In terms of biological role, participates in the degradation of poly-3-hydroxybutyrate (PHB). It works downstream of poly(3-hydroxybutyrate) depolymerase, hydrolyzing D(-)-3-hydroxybutyrate oligomers of various length (3HB-oligomers) into 3HB-monomers. The chain is D-(-)-3-hydroxybutyrate oligomer hydrolase from Burkholderia pseudomallei (strain 1710b).